We begin with the raw amino-acid sequence, 215 residues long: RNA pyrophosphohydrolase (215 aa).

Residues 6 to 149 (GFRPNVGIIL…KRDVYQLALT (144 aa)) form the Nudix hydrolase domain. The short motif at 38-59 (GGIKYGETPMQAMYRELHEETG) is the Nudix box element.

This sequence belongs to the Nudix hydrolase family. RppH subfamily. Requires a divalent metal cation as cofactor.

In terms of biological role, accelerates the degradation of transcripts by removing pyrophosphate from the 5'-end of triphosphorylated RNA, leading to a more labile monophosphorylated state that can stimulate subsequent ribonuclease cleavage. The protein is RNA pyrophosphohydrolase of Burkholderia vietnamiensis (strain G4 / LMG 22486) (Burkholderia cepacia (strain R1808)).